We begin with the raw amino-acid sequence, 151 residues long: Ribosome maturation factor RimP (151 aa).

This sequence belongs to the RimP family.

The protein resides in the cytoplasm. Required for maturation of 30S ribosomal subunits. The sequence is that of Ribosome maturation factor RimP from Mannheimia succiniciproducens (strain KCTC 0769BP / MBEL55E).